A 931-amino-acid polypeptide reads, in one-letter code: MDMFPLTWVFLALYFSRHQVRGQPDPPCGGRLNSKDAGYITSPGYPQDYPSHQNCEWIVYAPEPNQKIVLNFNPHFEIEKHDCKYDFIEIRDGDSESADLLGKHCGNIAPPTIISSGSMLYIKFTSDYARQGAGFSLRYEIFKTGSEDCSKNFTSPNGTIESPGFPEKYPHNLDCTFTILAKPKMEIILQFLIFDLEHDPLQVGEGDCKYDWLDIWDGIPHVGPLIGKYCGTKTPSELRSSTGILSLTFHTDMAVAKDGFSARYYLVHQEPLENFQCNVPLGMESGRIANEQISASSTYSDGRWTPQQSRLHGDDNGWTPNLDSNKEYLQVDLRFLTMLTAIATQGAISRETQNGYYVKSYKLEVSTNGEDWMVYRHGKNHKVFQANNDATEVVLNKLHAPLLTRFVRIRPQTWHSGIALRLELFGCRVTDAPCSNMLGMLSGLIADSQISASSTQEYLWSPSAARLVSSRSGWFPRIPQAQPGEEWLQVDLGTPKTVKGVIIQGARGGDSITAVEARAFVRKFKVSYSLNGKDWEYIQDPRTQQPKLFEGNMHYDTPDIRRFDPIPAQYVRVYPERWSPAGIGMRLEVLGCDWTDSKPTVETLGPTVKSEETTTPYPTEEEATECGENCSFEDDKDLQLPSGFNCNFDFLEEPCGWMYDHAKWLRTTWASSSSPNDRTFPDDRNFLRLQSDSQREGQYARLISPPVHLPRSPVCMEFQYQATGGRGVALQVVREASQESKLLWVIREDQGGEWKHGRIILPSYDMEYQIVFEGVIGKGRSGEIAIDDIRISTDVPLENCMEPISAFAGENFKVDIPEIHEREGYEDEIDDEYEVDWSNSSSATSGSGAPSTDKEKSWLYTLDPILITIIAMSSLGVLLGATCAGLLLYCTCSYSGLSSRSCTTLENYNFELYDGLKHKVKMNHQKCCSEA.

A signal peptide (or 22) is located at residues 1 to 20 (MDMFPLTWVFLALYFSRHQV). The Extracellular segment spans residues 21–864 (RGQPDPPCGG…EKSWLYTLDP (844 aa)). 3 cysteine pairs are disulfide-bonded: cysteine 28-cysteine 55, cysteine 83-cysteine 105, and cysteine 149-cysteine 175. 2 consecutive CUB domains span residues 28 to 142 (CGGR…YEIF) and 149 to 267 (CSKN…YYLV). 2 N-linked (GlcNAc...) asparagine glycosylation sites follow: asparagine 152 and asparagine 157. Ca(2+) contacts are provided by glutamate 197, aspartate 211, and aspartate 252. Cysteines 208 and 230 form a disulfide. Disulfide bonds link cysteine 277/cysteine 427 and cysteine 434/cysteine 592. F5/8 type C domains lie at 277–427 (CNVP…LFGC) and 434–592 (CSNM…VLGC). Residues 298 to 310 (TYSDGRWTPQQSR) are compositionally biased toward polar residues. Residues 298–317 (TYSDGRWTPQQSRLHGDDNG) are disordered. The interval 601–622 (VETLGPTVKSEETTTPYPTEEE) is disordered. N-linked (GlcNAc...) asparagine glycosylation is present at asparagine 629. The MAM domain maps to 642–802 (SGFNCNFDFL…TDVPLENCME (161 aa)). A glycan (N-linked (GlcNAc...) asparagine) is linked at asparagine 839. Residues 865–889 (ILITIIAMSSLGVLLGATCAGLLLY) traverse the membrane as a helical segment. Residues 890 to 931 (CTCSYSGLSSRSCTTLENYNFELYDGLKHKVKMNHQKCCSEA) are Cytoplasmic-facing.

Belongs to the neuropilin family. As to quaternary structure, heterodimer with NRP1. Binds PLXNB1. In terms of assembly, (Microbial infection) Interacts with human cytomegalovirus proteins gL, UL128, UL130 and UL131A.

The protein resides in the membrane. Its subcellular location is the secreted. Its function is as follows. High affinity receptor for semaphorins 3C, 3F, VEGF-165 and VEGF-145 isoforms of VEGF, and the PLGF-2 isoform of PGF. In terms of biological role, (Microbial infection) Acts as a receptor for human cytomegalovirus pentamer-dependent entry in epithelial and endothelial cells. This chain is Neuropilin-2 (NRP2), found in Homo sapiens (Human).